Reading from the N-terminus, the 494-residue chain is GTPase Der (494 aa).

EngA-type G domains follow at residues 3–166 and 206–379; these read PVVA…AEQM and IKLA…RSAT. Residues 9 to 16, 56 to 60, 118 to 121, 212 to 219, 259 to 263, and 324 to 327 each bind GTP; these read GRPNVGKS, DTGGI, NKVD, DTAGV, and NKWD. In terms of domain architecture, KH-like spans 380–464; the sequence is TRVGTSVLTR…PIRIQFQNSE (85 aa).

The protein belongs to the TRAFAC class TrmE-Era-EngA-EngB-Septin-like GTPase superfamily. EngA (Der) GTPase family. As to quaternary structure, associates with the 50S ribosomal subunit.

Its function is as follows. GTPase that plays an essential role in the late steps of ribosome biogenesis. The polypeptide is GTPase Der (Vibrio cholerae serotype O1 (strain ATCC 39541 / Classical Ogawa 395 / O395)).